The primary structure comprises 441 residues: Ribulose bisphosphate carboxylase large chain (441 aa).

K5 is subject to N6,N6,N6-trimethyllysine. Residues N114 and T164 each contribute to the substrate site. K166 functions as the Proton acceptor in the catalytic mechanism. K168 lines the substrate pocket. K192, D194, and E195 together coordinate Mg(2+). K192 bears the N6-carboxylysine mark. H285 serves as the catalytic Proton acceptor. Residues R286, H318, and S370 each contribute to the substrate site.

Belongs to the RuBisCO large chain family. Type I subfamily. As to quaternary structure, heterohexadecamer of 8 large chains and 8 small chains; disulfide-linked. The disulfide link is formed within the large subunit homodimers. It depends on Mg(2+) as a cofactor. In terms of processing, the disulfide bond which can form in the large chain dimeric partners within the hexadecamer appears to be associated with oxidative stress and protein turnover.

Its subcellular location is the plastid. The protein localises to the chloroplast. The catalysed reaction is 2 (2R)-3-phosphoglycerate + 2 H(+) = D-ribulose 1,5-bisphosphate + CO2 + H2O. The enzyme catalyses D-ribulose 1,5-bisphosphate + O2 = 2-phosphoglycolate + (2R)-3-phosphoglycerate + 2 H(+). Its function is as follows. RuBisCO catalyzes two reactions: the carboxylation of D-ribulose 1,5-bisphosphate, the primary event in carbon dioxide fixation, as well as the oxidative fragmentation of the pentose substrate in the photorespiration process. Both reactions occur simultaneously and in competition at the same active site. This chain is Ribulose bisphosphate carboxylase large chain, found in Begonia metallica x Begonia sanguinea.